The following is a 445-amino-acid chain: Probable glycine dehydrogenase (decarboxylating) subunit 1 (445 aa).

It belongs to the GcvP family. N-terminal subunit subfamily. The glycine cleavage system is composed of four proteins: P, T, L and H. In this organism, the P 'protein' is a heterodimer of two subunits.

The catalysed reaction is N(6)-[(R)-lipoyl]-L-lysyl-[glycine-cleavage complex H protein] + glycine + H(+) = N(6)-[(R)-S(8)-aminomethyldihydrolipoyl]-L-lysyl-[glycine-cleavage complex H protein] + CO2. The glycine cleavage system catalyzes the degradation of glycine. The P protein binds the alpha-amino group of glycine through its pyridoxal phosphate cofactor; CO(2) is released and the remaining methylamine moiety is then transferred to the lipoamide cofactor of the H protein. In Anaeromyxobacter dehalogenans (strain 2CP-C), this protein is Probable glycine dehydrogenase (decarboxylating) subunit 1.